Consider the following 102-residue polypeptide: Small ribosomal subunit protein uS10 (102 aa).

This sequence belongs to the universal ribosomal protein uS10 family. As to quaternary structure, part of the 30S ribosomal subunit.

Involved in the binding of tRNA to the ribosomes. This is Small ribosomal subunit protein uS10 from Syntrophus aciditrophicus (strain SB).